We begin with the raw amino-acid sequence, 83 residues long: MTFKPELATHTLEAEGLRCPEPVMMVRKTIRNMQDGDVLLVKADDPSTTRDIPSFCRFMDHQLVGQATETLPYQYLIRKGLEA.

Cys-19 acts as the Cysteine persulfide intermediate in catalysis.

It belongs to the sulfur carrier protein TusA family.

The protein resides in the cytoplasm. Functionally, sulfur carrier protein which probably makes part of a sulfur-relay system. In Vibrio atlanticus (strain LGP32) (Vibrio splendidus (strain Mel32)), this protein is Sulfur carrier protein TusA.